The following is a 129-amino-acid chain: Glycine cleavage system H protein (129 aa).

The Lipoyl-binding domain occupies 24-106 (VFTVGISEHA…YGDGWLFKIK (83 aa)). Position 65 is an N6-lipoyllysine (Lys65).

This sequence belongs to the GcvH family. In terms of assembly, the glycine cleavage system is composed of four proteins: P, T, L and H. Requires (R)-lipoate as cofactor.

Its function is as follows. The glycine cleavage system catalyzes the degradation of glycine. The H protein shuttles the methylamine group of glycine from the P protein to the T protein. The sequence is that of Glycine cleavage system H protein from Alteromonas mediterranea (strain DSM 17117 / CIP 110805 / LMG 28347 / Deep ecotype).